The following is a 446-amino-acid chain: Probable arogenate/prephenate dehydrogenase (446 aa).

Positions 6–288 constitute a Prephenate/arogenate dehydrogenase domain; sequence LTISIIGGTD…SEAKRGAYYS (283 aa).

It in the N-terminal section; belongs to the prephenate/arogenate dehydrogenase family.

The chain is Probable arogenate/prephenate dehydrogenase from Methanocaldococcus jannaschii (strain ATCC 43067 / DSM 2661 / JAL-1 / JCM 10045 / NBRC 100440) (Methanococcus jannaschii).